The following is a 79-amino-acid chain: Cell division protein ZapB (79 aa).

Residues 3 to 79 (LEVFEKLEAK…QALLGRMEEV (77 aa)) are a coiled coil.

This sequence belongs to the ZapB family. Homodimer. The ends of the coiled-coil dimer bind to each other, forming polymers. Interacts with FtsZ.

It is found in the cytoplasm. Non-essential, abundant cell division factor that is required for proper Z-ring formation. It is recruited early to the divisome by direct interaction with FtsZ, stimulating Z-ring assembly and thereby promoting cell division earlier in the cell cycle. Its recruitment to the Z-ring requires functional FtsA or ZipA. In Salmonella typhi, this protein is Cell division protein ZapB.